Reading from the N-terminus, the 376-residue chain is Putative type I restriction enzyme MpnIIP endonuclease subunit N-terminal part (376 aa).

The N-terminal section of a putative type I restriction enzyme that if reconstituted might recognize 5'-GAN(7)TAY-3' and cleave a random distance away. Subunit R is required for both nuclease and ATPase activities, but not for modification. The sequence is that of Putative type I restriction enzyme MpnIIP endonuclease subunit N-terminal part from Mycoplasma pneumoniae (strain ATCC 29342 / M129 / Subtype 1) (Mycoplasmoides pneumoniae).